A 431-amino-acid chain; its full sequence is Enolase (431 aa).

Residue Gln-163 coordinates (2R)-2-phosphoglycerate. Glu-205 functions as the Proton donor in the catalytic mechanism. 3 residues coordinate Mg(2+): Asp-242, Glu-288, and Asp-315. The (2R)-2-phosphoglycerate site is built by Lys-340, Arg-369, Ser-370, and Lys-391. Lys-340 serves as the catalytic Proton acceptor.

Belongs to the enolase family. Requires Mg(2+) as cofactor.

Its subcellular location is the cytoplasm. It localises to the secreted. The protein localises to the cell surface. The catalysed reaction is (2R)-2-phosphoglycerate = phosphoenolpyruvate + H2O. The protein operates within carbohydrate degradation; glycolysis; pyruvate from D-glyceraldehyde 3-phosphate: step 4/5. In terms of biological role, catalyzes the reversible conversion of 2-phosphoglycerate (2-PG) into phosphoenolpyruvate (PEP). It is essential for the degradation of carbohydrates via glycolysis. In Trichlorobacter lovleyi (strain ATCC BAA-1151 / DSM 17278 / SZ) (Geobacter lovleyi), this protein is Enolase.